A 348-amino-acid polypeptide reads, in one-letter code: Ion-translocating oxidoreductase complex subunit D (348 aa).

5 helical membrane-spanning segments follow: residues 15 to 35 (LTAK…GMQA), 36 to 56 (YFFG…AVAI), 67 to 87 (LTAF…LAMS), 88 to 108 (IPPY…LLLA), and 125 to 145 (VAYA…LVPI). An FMN phosphoryl threonine modification is found at threonine 186. 5 helical membrane passes run 212-232 (LFAN…LLLI), 241-261 (IPAA…LLLP), 265-285 (LNVV…FIAT), 298-318 (LIFG…GNYP), and 320-340 (AVAF…HYTQ).

The protein belongs to the NqrB/RnfD family. The complex is composed of six subunits: RnfA, RnfB, RnfC, RnfD, RnfE and RnfG. The cofactor is FMN.

It localises to the cell inner membrane. Its function is as follows. Part of a membrane-bound complex that couples electron transfer with translocation of ions across the membrane. The sequence is that of Ion-translocating oxidoreductase complex subunit D from Actinobacillus pleuropneumoniae serotype 7 (strain AP76).